The sequence spans 248 residues: 2,3-bisphosphoglycerate-dependent phosphoglycerate mutase (248 aa).

Substrate-binding positions include 8 to 15 (RHGESVWN), 21 to 22 (TG), arginine 60, 87 to 90 (ERHY), lysine 98, and 114 to 115 (RR). The active-site Tele-phosphohistidine intermediate is histidine 9. Glutamate 87 acts as the Proton donor/acceptor in catalysis. A disordered region spans residues 116–135 (SYDTPPPPMEVSDPRHPSHD). Residue 183-184 (GN) coordinates substrate.

Belongs to the phosphoglycerate mutase family. BPG-dependent PGAM subfamily. In terms of assembly, homodimer.

The catalysed reaction is (2R)-2-phosphoglycerate = (2R)-3-phosphoglycerate. It participates in carbohydrate degradation; glycolysis; pyruvate from D-glyceraldehyde 3-phosphate: step 3/5. In terms of biological role, catalyzes the interconversion of 2-phosphoglycerate and 3-phosphoglycerate. This chain is 2,3-bisphosphoglycerate-dependent phosphoglycerate mutase, found in Bdellovibrio bacteriovorus (strain ATCC 15356 / DSM 50701 / NCIMB 9529 / HD100).